Consider the following 250-residue polypeptide: 5-oxoprolinase subunit A (250 aa).

It belongs to the LamB/PxpA family. In terms of assembly, forms a complex composed of PxpA, PxpB and PxpC.

The enzyme catalyses 5-oxo-L-proline + ATP + 2 H2O = L-glutamate + ADP + phosphate + H(+). Its function is as follows. Catalyzes the cleavage of 5-oxoproline to form L-glutamate coupled to the hydrolysis of ATP to ADP and inorganic phosphate. The polypeptide is 5-oxoprolinase subunit A (Staphylococcus aureus (strain bovine RF122 / ET3-1)).